Reading from the N-terminus, the 275-residue chain is Arylalkylamine N-acetyltransferase 1 (275 aa).

Acetyl-CoA is bound by residues 181–183 (LSV) and 189–193 (GLGIA). An N-acetyltransferase domain is found at 181 to 254 (LSVDTNYRGL…GEVVFKPAAP (74 aa)).

The protein belongs to the acetyltransferase family. AANAT subfamily. As to expression, in the adult, expressed in the midgut portion of the thoracic segments and the frontal half of the abdomen (at protein level). Expressed in the epithelial cell layer facing the lumen of the gut (at protein level). In the brain, expressed in a sub-populations of neurons and astrocytes, and in a set of distinct stripes in the optic lobes (at protein level). Expressed mainly in serotonergic neurons but also in subsets of glutamatergic, GABAergic and cholinergic neurons (at protein level).

The protein localises to the cytoplasm. The protein resides in the nucleus. The catalysed reaction is a 2-arylethylamine + acetyl-CoA = an N-acetyl-2-arylethylamine + CoA + H(+). It catalyses the reaction serotonin + acetyl-CoA = N-acetylserotonin + CoA + H(+). The enzyme catalyses dopamine + acetyl-CoA = N-acetyldopamine + CoA + H(+). It carries out the reaction tyramine + acetyl-CoA = N-acetyltyramine + CoA + H(+). The catalysed reaction is octopamine + acetyl-CoA = N-acetyloctopamine + CoA + H(+). It catalyses the reaction 5-methoxytryptamine + acetyl-CoA = melatonin + CoA + H(+). The enzyme catalyses 2-phenylethylamine + acetyl-CoA = N-(2-phenylethyl)acetamide + CoA + H(+). It carries out the reaction noradrenaline + acetyl-CoA = N-acetylnoradrenaline + CoA + H(+). The catalysed reaction is tyramine + butanoyl-CoA = N-butanoyltyramine + CoA + H(+). It catalyses the reaction tyramine + hexanoyl-CoA = N-hexanoyltyramine + CoA + H(+). The enzyme catalyses tryptamine + acetyl-CoA = N-acetyltryptamine + CoA + H(+). It carries out the reaction dopamine + hexadecanoyl-CoA = N-hexadecanoyl-dopamine + CoA + H(+). The catalysed reaction is dopamine + (9Z)-octadecenoyl-CoA = N-(9Z-octadecanoyl)-dopamine + CoA + H(+). It catalyses the reaction serotonin + hexadecanoyl-CoA = N-hexadecanoyl-serotonin + CoA + H(+). The enzyme catalyses serotonin + (9Z)-octadecenoyl-CoA = N-(9Z-octadecenoyl)-serotonin + CoA + H(+). It carries out the reaction serotonin + octadecanoyl-CoA = N-octadecanoyl-serotonin + CoA + H(+). The catalysed reaction is serotonin + (5Z,8Z,11Z,14Z)-eicosatetraenoyl-CoA = N-[(5Z,8Z,11Z,14Z)-eicosatetraenoyl]-serotonin + CoA + H(+). Its pathway is aromatic compound metabolism; melatonin biosynthesis; melatonin from serotonin: step 1/2. With respect to regulation, inhibited by long-chain acyl-CoA thioesters, oleoyl-CoA (an analog of acetyl-CoA) and tyrosol (an analog of tyramine). Catalyzes N-acetylation of tryptamine, tyramine, dopamine, serotonin and octopamine. In astrocytes, regulates sleep homeostasis by limiting the accumulation of serotonin and dopamine in the brain upon sleep deprivation. Is not essential for sclerotization. In Drosophila melanogaster (Fruit fly), this protein is Arylalkylamine N-acetyltransferase 1.